A 417-amino-acid polypeptide reads, in one-letter code: Serine protease hepsin (417 aa).

Residues 1–23 (MAQKEGGRTVPCCSRPKVAALTA) are Cytoplasmic-facing. Residues 24–44 (GTLLLLTAIGAASWAIVAVLL) traverse the membrane as a helical; Signal-anchor for type II membrane protein segment. The Extracellular portion of the chain corresponds to 45–417 (RSDQEPLYPV…SEASGMVTQL (373 aa)). The SRCR domain occupies 54–151 (VQVSSADARL…RGRFLATICQ (98 aa)). Cystine bridges form between C77–C140, C90–C150, C119–C138, C153–C277, C188–C204, C291–C359, C322–C338, and C349–C381. N-linked (GlcNAc...) asparagine glycosylation occurs at N112. A Peptidase S1 domain is found at 163–405 (IVGGRDTSLG…FREWIFQAIK (243 aa)). Catalysis depends on charge relay system residues H203 and D257. Residue S353 is the Charge relay system of the active site.

It belongs to the peptidase S1 family.

It localises to the membrane. The enzyme catalyses Cleavage after basic amino-acid residues, with Arg strongly preferred to Lys.. In terms of biological role, plays an essential role in cell growth and maintenance of cell morphology. May mediate the activating cleavage of HGF and MST1/HGFL. Plays a role in the proteolytic processing of ACE2. This is Serine protease hepsin (HPN) from Pongo abelii (Sumatran orangutan).